Consider the following 449-residue polypeptide: Protein trichome birefringence-like 35 (449 aa).

A helical; Signal-anchor for type II membrane protein membrane pass occupies residues 12–29; the sequence is LPLAGLLFILVVTFMILF. The GDS motif motif lies at 185-187; that stretch reads GDS. A DCXHWCLPGXXDXWN motif motif is present at residues 428–442; that stretch reads DCTHWCVPGVPDVWN.

The protein belongs to the PC-esterase family. TBL subfamily.

The protein resides in the membrane. Its function is as follows. May act as a bridging protein that binds pectin and other cell wall polysaccharides. Probably involved in maintaining esterification of pectins. May be involved in the specific O-acetylation of cell wall polymers. This Arabidopsis thaliana (Mouse-ear cress) protein is Protein trichome birefringence-like 35 (TBL35).